We begin with the raw amino-acid sequence, 203 residues long: uncharacterized protein (203 aa).

A helical transmembrane segment spans residues 89-109 (CEIPFAACSVLSWSLPTIAAL).

It is found in the membrane. This is an uncharacterized protein from Saccharomyces cerevisiae (strain ATCC 204508 / S288c) (Baker's yeast).